We begin with the raw amino-acid sequence, 958 residues long: Translation initiation factor IF-2 (958 aa).

A compositionally biased stretch (low complexity) spans 50 to 67; it reads FKPAAAPKVEAKPAAPKV. 2 disordered regions span residues 50–224 and 288–374; these read FKPA…RIDF and EVVP…HELP. Composition is skewed to basic and acidic residues over residues 68–89, 96–118, and 138–153; these read SAEK…EEAK, SAEK…EAKP, and FKAE…AERR. The segment covering 157 to 169 has biased composition (low complexity); that stretch reads KGNNRDQQQNGNR. 2 stretches are compositionally biased toward basic and acidic residues: residues 185-195 and 290-323; these read RDNRRFNDQAK and VPEK…DGPR. The span at 337–346 shows a compositional bias: low complexity; sequence NQKNSNWNNN. A compositionally biased stretch (basic and acidic residues) spans 365-374; the sequence is VTERKFHELP. The region spanning 460–627 is the tr-type G domain; the sequence is ERPPVVTIMG…TVLLVAEIQE (168 aa). The tract at residues 469-476 is G1; sequence GHVDHGKT. 469–476 contacts GTP; the sequence is GHVDHGKT. Residues 494-498 are G2; the sequence is GITQH. The segment at 515–518 is G3; that stretch reads DTPG. GTP contacts are provided by residues 515 to 519 and 569 to 572; these read DTPGH and NKID. Residues 569–572 form a G4 region; sequence NKID. The G5 stretch occupies residues 605 to 607; the sequence is SAK.

Belongs to the TRAFAC class translation factor GTPase superfamily. Classic translation factor GTPase family. IF-2 subfamily.

It is found in the cytoplasm. One of the essential components for the initiation of protein synthesis. Protects formylmethionyl-tRNA from spontaneous hydrolysis and promotes its binding to the 30S ribosomal subunits. Also involved in the hydrolysis of GTP during the formation of the 70S ribosomal complex. The sequence is that of Translation initiation factor IF-2 from Streptococcus pneumoniae serotype 4 (strain ATCC BAA-334 / TIGR4).